A 218-amino-acid chain; its full sequence is Putative tRNA methyltransferase MG248 (218 aa).

It belongs to the TrmK family.

The protein resides in the cytoplasm. This Mycoplasma genitalium (strain ATCC 33530 / DSM 19775 / NCTC 10195 / G37) (Mycoplasmoides genitalium) protein is Putative tRNA methyltransferase MG248.